The sequence spans 197 residues: MAESPKINRREHILQCLAQMLETSPGQRITTAKLAAEVGVSEAALYRHFPSKARMFEGLIEFIEDAILSRLNIIMDEEKDTMTRCQLVLHLLLVFSERNPGISRVLNGDALLGENERLRSRIDVLFAKIETHIKQILREKTLREGVGFNIDEAILANLLLAFAEGRISQFVRSEFKQKPTQHFDEQWTFIQQQLLRS.

Positions 7-67 constitute an HTH tetR-type domain; the sequence is INRREHILQC…GLIEFIEDAI (61 aa). Positions 30-49 form a DNA-binding region, H-T-H motif; the sequence is TTAKLAAEVGVSEAALYRHF. A coiled-coil region spans residues 110-130; the sequence is ALLGENERLRSRIDVLFAKIE.

It belongs to the nucleoid occlusion factor SlmA family. In terms of assembly, homodimer. Interacts with FtsZ.

The protein localises to the cytoplasm. The protein resides in the nucleoid. Functionally, required for nucleoid occlusion (NO) phenomenon, which prevents Z-ring formation and cell division over the nucleoid. Acts as a DNA-associated cell division inhibitor that binds simultaneously chromosomal DNA and FtsZ, and disrupts the assembly of FtsZ polymers. SlmA-DNA-binding sequences (SBS) are dispersed on non-Ter regions of the chromosome, preventing FtsZ polymerization at these regions. In Shewanella frigidimarina (strain NCIMB 400), this protein is Nucleoid occlusion factor SlmA.